We begin with the raw amino-acid sequence, 557 residues long: uncharacterized protein (557 aa).

The region spanning 70 to 224 (KVVEKMNGKA…FNLVSLLKPG (155 aa)) is the Helicase ATP-binding domain. 82 to 90 (ADEVGLGKT) provides a ligand contact to ATP. A DEAH box motif is present at residues 175-178 (DEAH). The Helicase C-terminal domain occupies 363-524 (QVVDLIKKID…NFEEHLHDIL (162 aa)).

It belongs to the SNF2/RAD54 helicase family.

This is an uncharacterized protein from Bacillus subtilis (strain 168).